The sequence spans 540 residues: Putative BTB/POZ domain-containing protein R224 (540 aa).

The BTB domain occupies Thr16–Asn88. Residues Ile356 to Ile376 form a helical membrane-spanning segment.

Belongs to the mimivirus BTB/WD family.

It is found in the membrane. The chain is Putative BTB/POZ domain-containing protein R224 from Acanthamoeba polyphaga (Amoeba).